The chain runs to 47 residues: Potassium channel toxin alpha-KTx 7.1 (47 aa).

The signal sequence occupies residues 1–12; it reads RGSVDYKDDDDK. Cystine bridges form between Cys-16/Cys-37, Cys-22/Cys-42, and Cys-26/Cys-44.

The protein belongs to the short scorpion toxin superfamily. Potassium channel inhibitor family. Alpha-KTx 07 subfamily. Expressed by the venom gland.

It is found in the secreted. Functionally, potent inhibitor of the A-type voltage-gated potassium channels. Most potent inhibitor of Kv1.2/KCNA2 channels. Reversibly block the Shaker B potassium-channels (Kv1.1 sub-family). The sequence is that of Potassium channel toxin alpha-KTx 7.1 (PTX-1) from Pandinus imperator (Emperor scorpion).